Here is a 426-residue protein sequence, read N- to C-terminus: AP-1 complex subunit mu-1 (426 aa).

The region spanning 167–425 (KNEVFLDVIE…TQNGTEYSIR (259 aa)) is the MHD domain.

Belongs to the adaptor complexes medium subunit family. As to quaternary structure, adaptor protein complex 1 (AP-1) is a heterotetramer composed of two large adaptins (gamma-type subunit apl4 and beta-type subunit apl2), a medium adaptin (mu-type subunit apm1) and a small adaptin (sigma-type subunit aps1). AP-1 interacts with clathrin. Interacts with sad1.

The protein localises to the cytoplasmic vesicle. The protein resides in the clathrin-coated vesicle membrane. It localises to the membrane. Its subcellular location is the clathrin-coated pit. Functionally, component of the adaptor complexes which link clathrin to receptors in coated vesicles. Clathrin-associated protein complexes are believed to interact with the cytoplasmic tails of membrane proteins, leading to their selection and concentration. This Schizosaccharomyces pombe (strain 972 / ATCC 24843) (Fission yeast) protein is AP-1 complex subunit mu-1 (apm1).